Here is a 300-residue protein sequence, read N- to C-terminus: MNLEVEIAGVKLKNPVIAASGTFGFGREYSKLIDISEFGAICTKGITLKKRNGNPQPRLCEVYGGIINSVGLENPGVEAFVNEELPFLKGFNTKIIANINGFTKEEFVELTKVLSSLVDMIEVNLSCPNVKEGGMVFGKDPEKVYEITKSVKDVASCPIIVKLTPNVTDIAQLAIAAEKAGADAISLINTVSAMAIDIETRKPLIKMVTGGLSGPAIKPIAVRMVYECFKKVRIPIVGMGGIMNYKDAIEFFIAGATAIQIGTVNFINPKAVCEIKEGIEAYLERKGFNSIKELVGNINI.

Residues serine 20 and lysine 44 to glycine 45 contribute to the FMN site. Residues lysine 44 and asparagine 68 to leucine 72 contribute to the substrate site. Asparagine 98 and asparagine 124 together coordinate FMN. Asparagine 124 is a substrate binding site. Cysteine 127 functions as the Nucleophile in the catalytic mechanism. Residues lysine 162 and isoleucine 188 each contribute to the FMN site. Residue asparagine 189–threonine 190 participates in substrate binding. FMN contacts are provided by residues glycine 214, glycine 240 to glycine 241, and glycine 262 to threonine 263.

This sequence belongs to the dihydroorotate dehydrogenase family. Type 1 subfamily. Heterotetramer of 2 PyrK and 2 PyrD type B subunits. Requires FMN as cofactor.

Its subcellular location is the cytoplasm. The enzyme catalyses (S)-dihydroorotate + NAD(+) = orotate + NADH + H(+). It functions in the pathway pyrimidine metabolism; UMP biosynthesis via de novo pathway; orotate from (S)-dihydroorotate (NAD(+) route): step 1/1. Its function is as follows. Catalyzes the conversion of dihydroorotate to orotate with NAD(+) as electron acceptor. This Caldicellulosiruptor saccharolyticus (strain ATCC 43494 / DSM 8903 / Tp8T 6331) protein is Dihydroorotate dehydrogenase B (NAD(+)), catalytic subunit (pyrD).